Here is a 526-residue protein sequence, read N- to C-terminus: ATP synthase subunit alpha (526 aa).

171–178 (GDRQTGKT) is a binding site for ATP.

This sequence belongs to the ATPase alpha/beta chains family. In terms of assembly, F-type ATPases have 2 components, CF(1) - the catalytic core - and CF(0) - the membrane proton channel. CF(1) has five subunits: alpha(3), beta(3), gamma(1), delta(1), epsilon(1). CF(0) has four main subunits: a(1), b(1), b'(1) and c(9-12).

Its subcellular location is the cell inner membrane. The catalysed reaction is ATP + H2O + 4 H(+)(in) = ADP + phosphate + 5 H(+)(out). Functionally, produces ATP from ADP in the presence of a proton gradient across the membrane. The alpha chain is a regulatory subunit. The sequence is that of ATP synthase subunit alpha from Chlorobium phaeobacteroides (strain DSM 266 / SMG 266 / 2430).